Consider the following 320-residue polypeptide: Histidine decarboxylase proenzyme (320 aa).

The propeptide occupies 2–11 (NKNLEANRNR). At S98 the chain carries Pyruvic acid (Ser). E215 functions as the Proton donor in the catalytic mechanism.

As to quaternary structure, the proenzyme is a hexamer of identical pi chains; each pi chain monomer is cleaved to form a small (or beta) chain and a large (or alpha) chain by non-hydrolytic self-catalysis. The cofactor is pyruvate.

The catalysed reaction is L-histidine + H(+) = histamine + CO2. In Clostridium perfringens (strain ATCC 13124 / DSM 756 / JCM 1290 / NCIMB 6125 / NCTC 8237 / Type A), this protein is Histidine decarboxylase proenzyme (hdc).